The primary structure comprises 175 residues: Bifunctional protein PyrR (175 aa).

A PRPP-binding motif is present at residues 98 to 110; the sequence is VIIIDDVLYTGRT.

Belongs to the purine/pyrimidine phosphoribosyltransferase family. PyrR subfamily. Homodimer and homohexamer; in equilibrium.

The enzyme catalyses UMP + diphosphate = 5-phospho-alpha-D-ribose 1-diphosphate + uracil. Functionally, regulates transcriptional attenuation of the pyrimidine nucleotide (pyr) operon by binding in a uridine-dependent manner to specific sites on pyr mRNA. This disrupts an antiterminator hairpin in the RNA and favors formation of a downstream transcription terminator, leading to a reduced expression of downstream genes. Also displays a weak uracil phosphoribosyltransferase activity which is not physiologically significant. The chain is Bifunctional protein PyrR from Staphylococcus carnosus (strain TM300).